The sequence spans 95 residues: uncharacterized protein (95 aa).

Position 21 (Lys21) interacts with phosphate. Residue Asp44 coordinates Mg(2+). Asn47 is a binding site for phosphate.

Belongs to the HAD-like hydrolase superfamily. Cof family. It depends on Mg(2+) as a cofactor.

This is an uncharacterized protein from Geobacillus stearothermophilus (Bacillus stearothermophilus).